The chain runs to 129 residues: Methylmalonyl-CoA decarboxylase subunit gamma (129 aa).

Low complexity-rich tracts occupy residues 24–39 (APAAAPKAAPAAAPAP) and 49–58 (PAAAAAPVPA). The interval 24-58 (APAAAPKAAPAAAPAPKAAPAPAPAPAAAAAPVPA) is disordered. Positions 51-129 (AAAAPVPAGA…STGDDMVVLG (79 aa)) constitute a Biotinyl-binding domain. Residue Lys95 is modified to N6-biotinyllysine.

The methylmalonyl-CoA decarboxylase is composed of five subunits: the carboxyltransferase alpha subunit (MmdA), the tunnel beta subunit (MmdB), the biotin-containing gamma subunit (MmdC), and the delta (MmdD) and epsilon (MmdE) subunits. Biotin is required as a cofactor.

It localises to the cell membrane. The catalysed reaction is (S)-methylmalonyl-CoA + Na(+)(in) + H(+)(out) = propanoyl-CoA + Na(+)(out) + CO2. With respect to regulation, completely inhibited by avidin. Biotin-containing subunit of the sodium ion pump methylmalonyl-CoA decarboxylase, which converts the chemical energy of a decarboxylation reaction into an electrochemical gradient of Na(+) ions across the cytoplasmic membrane, thereby creating a sodium ion motive force that is used for ATP synthesis. Can also convert malonyl-CoA into acetyl-CoA. The polypeptide is Methylmalonyl-CoA decarboxylase subunit gamma (Veillonella parvula (Staphylococcus parvulus)).